A 104-amino-acid polypeptide reads, in one-letter code: MAAKIKKGDKVVILAGRDKGKTGEVTKVLPTEDRVVVAGVNVVKRHTRATQTEQGGIIEKEASIHVSNVAVADPKTGEATRVGFKTEDGKKVRVAKSSGEVIDV.

Belongs to the universal ribosomal protein uL24 family. In terms of assembly, part of the 50S ribosomal subunit.

In terms of biological role, one of two assembly initiator proteins, it binds directly to the 5'-end of the 23S rRNA, where it nucleates assembly of the 50S subunit. Its function is as follows. One of the proteins that surrounds the polypeptide exit tunnel on the outside of the subunit. The protein is Large ribosomal subunit protein uL24 of Maricaulis maris (strain MCS10) (Caulobacter maris).